We begin with the raw amino-acid sequence, 258 residues long: Tryptophan synthase alpha chain (258 aa).

Active-site proton acceptor residues include Glu47 and Asp58.

This sequence belongs to the TrpA family. Tetramer of two alpha and two beta chains.

The enzyme catalyses (1S,2R)-1-C-(indol-3-yl)glycerol 3-phosphate + L-serine = D-glyceraldehyde 3-phosphate + L-tryptophan + H2O. The protein operates within amino-acid biosynthesis; L-tryptophan biosynthesis; L-tryptophan from chorismate: step 5/5. Functionally, the alpha subunit is responsible for the aldol cleavage of indoleglycerol phosphate to indole and glyceraldehyde 3-phosphate. The sequence is that of Tryptophan synthase alpha chain from Bacillus cereus (strain ZK / E33L).